Here is a 419-residue protein sequence, read N- to C-terminus: Serine hydroxymethyltransferase (419 aa).

(6S)-5,6,7,8-tetrahydrofolate contacts are provided by residues Leu-121 and 125 to 127 (GHL). Lys-229 is modified (N6-(pyridoxal phosphate)lysine). Position 354–356 (354–356 (SPF)) interacts with (6S)-5,6,7,8-tetrahydrofolate.

It belongs to the SHMT family. As to quaternary structure, homodimer. Pyridoxal 5'-phosphate serves as cofactor.

Its subcellular location is the cytoplasm. The enzyme catalyses (6R)-5,10-methylene-5,6,7,8-tetrahydrofolate + glycine + H2O = (6S)-5,6,7,8-tetrahydrofolate + L-serine. It participates in one-carbon metabolism; tetrahydrofolate interconversion. Its pathway is amino-acid biosynthesis; glycine biosynthesis; glycine from L-serine: step 1/1. Catalyzes the reversible interconversion of serine and glycine with tetrahydrofolate (THF) serving as the one-carbon carrier. This reaction serves as the major source of one-carbon groups required for the biosynthesis of purines, thymidylate, methionine, and other important biomolecules. Also exhibits THF-independent aldolase activity toward beta-hydroxyamino acids, producing glycine and aldehydes, via a retro-aldol mechanism. In Coxiella burnetii (strain RSA 493 / Nine Mile phase I), this protein is Serine hydroxymethyltransferase.